The chain runs to 141 residues: Large ribosomal subunit protein uL11 (141 aa).

Belongs to the universal ribosomal protein uL11 family. In terms of assembly, part of the ribosomal stalk of the 50S ribosomal subunit. Interacts with L10 and the large rRNA to form the base of the stalk. L10 forms an elongated spine to which L12 dimers bind in a sequential fashion forming a multimeric L10(L12)X complex. In terms of processing, one or more lysine residues are methylated.

Its function is as follows. Forms part of the ribosomal stalk which helps the ribosome interact with GTP-bound translation factors. In Alkaliphilus oremlandii (strain OhILAs) (Clostridium oremlandii (strain OhILAs)), this protein is Large ribosomal subunit protein uL11.